We begin with the raw amino-acid sequence, 378 residues long: uncharacterized protein (378 aa).

This is an uncharacterized protein from Escherichia coli (strain K12).